A 74-amino-acid polypeptide reads, in one-letter code: Tau-AnmTx Ueq 12-1 (74 aa).

An N-terminal signal peptide occupies residues 1–18 (MCLLMLVLGAMYVQGWHS). Positions 19–27 (AGFGKRTLK) are cleaved as a propeptide — removed in mature form. Disulfide bonds link C30–C37, C40–C71, C46–C64, C51–C72, and C58–C73.

Belongs to the Cnidaria small cysteine-rich protein (SCRiP) family. As to expression, detected in mucus secreted from ectoderm.

Its subcellular location is the secreted. Its function is as follows. Potentiates activation of mammalian TRPA1, a non-selective cation channel involved in perception of pain, in vitro yet has an analgesic and anti-inflammatory effect in vivo. Has antibacterial activity against C.glutamicum (MIC=50 uM) and, to a lesser extent, against S.aureus but not against P.aeruginosa or E.coli. The sequence is that of Tau-AnmTx Ueq 12-1 from Urticina eques (Sea anemone).